The primary structure comprises 60 residues: MAKGKENRIVITLECTEAKKEGKTVSRYTTTKNKKNTTERLLLKKYNPNLQRHTIHKEIK.

Belongs to the bacterial ribosomal protein bL33 family.

The polypeptide is Large ribosomal subunit protein bL33 (Chlorobium phaeobacteroides (strain DSM 266 / SMG 266 / 2430)).